The primary structure comprises 337 residues: MLEKFERYPLTFGPTHIEKLERLSEHLGGKVQLYAKREDCNSGLAFGGNKLRKLEYIIPDAIASNADTLVSIGGVQSNHTRMIAAVAAKIGFKCRLVQESWVPHEDAVYDRVGNILLSRIMGADVQMVDEGFDIGIRQSWEEAIEDVKAKGGKPYPIPAGASVHKYGGLGYVGFAEEVRVQEEELGFKFDYIVVCTVTGSTHAGMTVGFAKDGRERQVIGIDASFTPAQTKAQVLEIARRTAELVELGRELSSDDIVLIEDYAYPVYGVPSDETKEAIRLCARLEGMITDPVYEGKSMQGMIDLVKKGYFPEGSKVLYAHLGGAPAINGYAYTFRNG.

Position 50 is an N6-(pyridoxal phosphate)lysine (K50). The Nucleophile role is filled by S77.

The protein belongs to the ACC deaminase/D-cysteine desulfhydrase family. As to quaternary structure, homotrimer. Requires pyridoxal 5'-phosphate as cofactor.

It carries out the reaction 1-aminocyclopropane-1-carboxylate + H2O = 2-oxobutanoate + NH4(+). Its function is as follows. Catalyzes a cyclopropane ring-opening reaction, the irreversible conversion of 1-aminocyclopropane-1-carboxylate (ACC) to ammonia and alpha-ketobutyrate. Allows growth on ACC as a nitrogen source. The sequence is that of 1-aminocyclopropane-1-carboxylate deaminase from Rhizobium rhizogenes (strain K84 / ATCC BAA-868) (Agrobacterium radiobacter).